Here is an 887-residue protein sequence, read N- to C-terminus: Leucine--tRNA ligase (887 aa).

A 'HIGH' region motif is present at residues 48–58 (PYPSGKLHMGH). Positions 644–648 (TMSKS) match the 'KMSKS' region motif. Lysine 647 lines the ATP pocket.

Belongs to the class-I aminoacyl-tRNA synthetase family.

The protein localises to the cytoplasm. It carries out the reaction tRNA(Leu) + L-leucine + ATP = L-leucyl-tRNA(Leu) + AMP + diphosphate. The chain is Leucine--tRNA ligase from Leptothrix cholodnii (strain ATCC 51168 / LMG 8142 / SP-6) (Leptothrix discophora (strain SP-6)).